Reading from the N-terminus, the 527-residue chain is Arginine--tRNA ligase (527 aa).

Residues 108-118 (ANPTGPLHIGH) carry the 'HIGH' region motif.

The protein belongs to the class-I aminoacyl-tRNA synthetase family. In terms of assembly, monomer.

It localises to the cytoplasm. It catalyses the reaction tRNA(Arg) + L-arginine + ATP = L-arginyl-tRNA(Arg) + AMP + diphosphate. This Sulfurimonas denitrificans (strain ATCC 33889 / DSM 1251) (Thiomicrospira denitrificans (strain ATCC 33889 / DSM 1251)) protein is Arginine--tRNA ligase.